The following is a 131-amino-acid chain: Small ribosomal subunit protein uS8 (131 aa).

The protein belongs to the universal ribosomal protein uS8 family. In terms of assembly, part of the 30S ribosomal subunit. Contacts proteins S5 and S12.

In terms of biological role, one of the primary rRNA binding proteins, it binds directly to 16S rRNA central domain where it helps coordinate assembly of the platform of the 30S subunit. This Nitrosomonas europaea (strain ATCC 19718 / CIP 103999 / KCTC 2705 / NBRC 14298) protein is Small ribosomal subunit protein uS8.